Consider the following 178-residue polypeptide: uncharacterized protein (178 aa).

The protein localises to the mitochondrion. This is an uncharacterized protein from Paramecium tetraurelia.